A 380-amino-acid polypeptide reads, in one-letter code: Histone deacetylase-like amidohydrolase (380 aa).

The active-site Proton donor/acceptor is histidine 144. Residues aspartate 181, histidine 183, and aspartate 269 each contribute to the Zn(2+) site.

The protein belongs to the histone deacetylase family. Homotetramer; dimer of head-to-head dimers. Zn(2+) serves as cofactor.

Is inhibited by azobenzenes, stilbenes and arylazopyrazoles. Its function is as follows. Probable protein deacetylase that catalyzes deacetylation of acetylated lysine residues. In vitro, exhibits high activity against artificial HDAC (histone deacetylase) substrates containing acetylated and trifluoroacetylated lysine residues. Is not able to deacetylate acetylated polyamines. In Pseudomonas aeruginosa (strain ATCC 15692 / DSM 22644 / CIP 104116 / JCM 14847 / LMG 12228 / 1C / PRS 101 / PAO1), this protein is Histone deacetylase-like amidohydrolase.